The following is a 110-amino-acid chain: MEVAAKLRGAGLSAQKARLVADQIRGKSVEEALDLLAFSTKKGAAVIKKVLESAIANAEHNEGADVDELKVSTIFVDEGLTMKRIRPRAKGRADRIFKRTCHITVKVADQ.

It belongs to the universal ribosomal protein uL22 family. Part of the 50S ribosomal subunit.

Its function is as follows. This protein binds specifically to 23S rRNA; its binding is stimulated by other ribosomal proteins, e.g. L4, L17, and L20. It is important during the early stages of 50S assembly. It makes multiple contacts with different domains of the 23S rRNA in the assembled 50S subunit and ribosome. In terms of biological role, the globular domain of the protein is located near the polypeptide exit tunnel on the outside of the subunit, while an extended beta-hairpin is found that lines the wall of the exit tunnel in the center of the 70S ribosome. In Teredinibacter turnerae (strain ATCC 39867 / T7901), this protein is Large ribosomal subunit protein uL22.